Consider the following 690-residue polypeptide: F-box/LRR-repeat protein 5 (690 aa).

Positions 1 to 159 are hemerythrin-like; that stretch reads MAPFPDEVDV…IKKKVIAQHC (159 aa). The Fe(3+) site is built by His15, His57, Glu58, Glu61, His80, His126, and Glu130. One can recognise an F-box domain in the interval 202–248; sequence STGITHLPPEVMLSIFSYLNPQELCRCSQVSTKWSQLAKTGSLWKHL. 7 LRR repeats span residues 340 to 364, 365 to 392, 393 to 418, 478 to 507, 575 to 606, 607 to 634, and 635 to 660; these read SSAVSSKMVRQILELCPNLEHLDLT, QTDISDSAFDSWSWLGCCQSLRHLDLSG, CEKITDMALEKISRALGVLTSHQSGF, VWMLDAEDLADIEDAVEWRHRNVESLCVME, TTLPRGKDLIYFGSEKSDQETGRVLLFLSLSG, CYQITDHGLRALTLGGGLPYLEHLNLSG, and CLTVTGAGLQDLVSACPSLNDEYFYY. Residues Cys661, Cys675, Cys685, and Cys686 each contribute to the [2Fe-2S] cluster site.

Part of a SCF (SKP1-cullin-F-box) protein ligase complex. Interacts with ACO1/IRP1, IREB2/IRP2; the interaction depends on the [2Fe-2S] cluster. Interacts with DCTN1/p150-glued. The cofactor is [2Fe-2S] cluster. Post-translationally, polybiquitinated upon iron and oxygen depletion, leading to its degradation by the proteasome. Ubiquitination is regulated by the hemerythrin-like region that acts as an oxygen and iron sensor. Undergoes constitutive ubiquitin-dependent degradation at the steady state by HERC2. As to expression, ubiquitously expressed. Highly expressed in early embryogenesis with expression decreasing as the embryo progresses through development (E11 and E15).

It localises to the cytoplasm. It is found in the perinuclear region. Its subcellular location is the nucleus. It participates in protein modification; protein ubiquitination. With respect to regulation, an iron-sulfur cluster promotes IRP2 polyubiquitination and degradation in response to both iron and oxygen concentrations. In terms of biological role, component of some SCF (SKP1-cullin-F-box) protein ligase complex that plays a central role in iron homeostasis by promoting the ubiquitination and subsequent degradation of IREB2/IRP2. The C-terminal domain of FBXL5 contains a redox-sensitive [2Fe-2S] cluster that, upon oxidation, promotes binding to IRP2 to effect its oxygen-dependent degradation. Under iron deficiency conditions, the N-terminal hemerythrin-like (Hr) region, which contains a diiron metal center, cannot bind iron and undergoes conformational changes that destabilize the FBXL5 protein and cause its ubiquitination and degradation. When intracellular iron levels start rising, the Hr region is stabilized. Additional increases in iron levels facilitate the assembly and incorporation of a redox active [2Fe-2S] cluster in the C-terminal domain. Only when oxygen level is high enough to maintain the cluster in its oxidized state can FBXL5 recruit IRP2 as a substrate for polyubiquination and degradation. Promotes ubiquitination and subsequent degradation of the dynactin complex component DCTN1. Within the nucleus, promotes the ubiquitination of SNAI1; preventing its interaction with DNA and promoting its degradation. Negatively regulates DNA damage response by mediating the ubiquitin-proteasome degradation of the DNA repair protein NABP2. This Mus musculus (Mouse) protein is F-box/LRR-repeat protein 5 (Fbxl5).